Here is a 432-residue protein sequence, read N- to C-terminus: Amino-acid acetyltransferase (432 aa).

In terms of domain architecture, N-acetyltransferase spans 286–425; the sequence is ELVREAAIED…ASLYNYQRNS (140 aa).

Belongs to the acetyltransferase family. ArgA subfamily.

Its subcellular location is the cytoplasm. It catalyses the reaction L-glutamate + acetyl-CoA = N-acetyl-L-glutamate + CoA + H(+). The protein operates within amino-acid biosynthesis; L-arginine biosynthesis; N(2)-acetyl-L-ornithine from L-glutamate: step 1/4. In Pseudomonas fluorescens (strain Pf0-1), this protein is Amino-acid acetyltransferase.